Here is a 310-residue protein sequence, read N- to C-terminus: Protein-methionine-sulfoxide reductase catalytic subunit MsrP (310 aa).

The segment at residues 1–45 (MRKTSSPRIAPSEITPRDLYHDRRRFMQAAAGAAAAALWPHWLSA) is a signal peptide (tat-type signal). Residues N73, 76–77 (YE), C131, T166, N214, R219, and 230–232 (SAK) each bind Mo-molybdopterin.

This sequence belongs to the MsrP family. Heterodimer of a catalytic subunit (MsrP) and a heme-binding subunit (MsrQ). Mo-molybdopterin serves as cofactor. Predicted to be exported by the Tat system. The position of the signal peptide cleavage has not been experimentally proven.

Its subcellular location is the periplasm. It catalyses the reaction L-methionyl-[protein] + a quinone + H2O = L-methionyl-(S)-S-oxide-[protein] + a quinol. The catalysed reaction is L-methionyl-[protein] + a quinone + H2O = L-methionyl-(R)-S-oxide-[protein] + a quinol. In terms of biological role, part of the MsrPQ system that repairs oxidized periplasmic proteins containing methionine sulfoxide residues (Met-O), using respiratory chain electrons. Thus protects these proteins from oxidative-stress damage caused by reactive species of oxygen and chlorine generated by the host defense mechanisms. MsrPQ is essential for the maintenance of envelope integrity under bleach stress, rescuing a wide series of structurally unrelated periplasmic proteins from methionine oxidation. The catalytic subunit MsrP is non-stereospecific, being able to reduce both (R-) and (S-) diastereoisomers of methionine sulfoxide. In Methylococcus capsulatus (strain ATCC 33009 / NCIMB 11132 / Bath), this protein is Protein-methionine-sulfoxide reductase catalytic subunit MsrP.